The primary structure comprises 142 residues: FAD synthase (142 aa).

ATP contacts are provided by residues 9 to 10, 14 to 17, Asp92, and Tyr119; these read TF and HPGH.

The protein belongs to the archaeal FAD synthase family. In terms of assembly, homodimer. It depends on a divalent metal cation as a cofactor.

It catalyses the reaction FMN + ATP + H(+) = FAD + diphosphate. It participates in cofactor biosynthesis; FAD biosynthesis; FAD from FMN: step 1/1. Functionally, catalyzes the transfer of the AMP portion of ATP to flavin mononucleotide (FMN) to produce flavin adenine dinucleotide (FAD) coenzyme. In Halorhabdus utahensis (strain DSM 12940 / JCM 11049 / AX-2), this protein is FAD synthase.